The following is a 144-amino-acid chain: 3-hydroxyacyl-[acyl-carrier-protein] dehydratase FabZ (144 aa).

The active site involves histidine 49.

This sequence belongs to the thioester dehydratase family. FabZ subfamily.

The protein localises to the cytoplasm. The enzyme catalyses a (3R)-hydroxyacyl-[ACP] = a (2E)-enoyl-[ACP] + H2O. Involved in unsaturated fatty acids biosynthesis. Catalyzes the dehydration of short chain beta-hydroxyacyl-ACPs and long chain saturated and unsaturated beta-hydroxyacyl-ACPs. The chain is 3-hydroxyacyl-[acyl-carrier-protein] dehydratase FabZ from Alkaliphilus oremlandii (strain OhILAs) (Clostridium oremlandii (strain OhILAs)).